The following is a 1394-amino-acid chain: ATP-dependent permease AUS1 (1394 aa).

At 1 to 420 (MSISKYFTPV…PLTTIGSYSR (420 aa)) the chain is on the cytoplasmic side. The ABC transporter 1 domain maps to 33–273 (KKSYDAEDSM…FRDTLGIEKD (241 aa)). A run of 6 helical transmembrane segments spans residues 421 to 443 (GSLT…PIAF), 468 to 490 (TVFD…YFLA), 497 to 519 (ARFF…LFAL), 529 to 551 (VANL…VIYL), 558 to 575 (FVWI…EAIL), and 636 to 658 (VWRN…LFAS). At 659 to 1080 (QYIKPYFNKD…QYICTKRDMT (422 aa)) the chain is on the cytoplasmic side. Residues 751–978 (ISWKNINYTV…YFMSHDNTLV (228 aa)) enclose the ABC transporter 2 domain. Position 782–789 (782–789 (GESGAGKT)) interacts with ATP. The next 6 helical transmembrane spans lie at 1081-1103 (YVMA…FWHI), 1107-1129 (IIGL…PLIN), 1156-1178 (VLLL…LFFV), 1193-1215 (AGVF…LWLI), 1224-1246 (AAVF…QPYS), and 1346-1368 (FGIE…YLTY). The Cytoplasmic segment spans residues 1369–1394 (VARIWPKVFKIITKVIPHRGKKPVQN).

The protein belongs to the ABC transporter superfamily. ABCG family. PDR (TC 3.A.1.205) subfamily.

Its subcellular location is the membrane. Its function is as follows. Transporter involved in the uptake of sterol. In Saccharomyces cerevisiae (strain ATCC 204508 / S288c) (Baker's yeast), this protein is ATP-dependent permease AUS1 (AUS1).